The following is an 86-amino-acid chain: Cytochrome c oxidase subunit 6B1 (86 aa).

Alanine 2 is subject to N-acetylalanine. The 47-residue stretch at 27–73 (TRNCWQNYLDFHRCQKAMTAKGGDISVCEWYQRVYQSLCPTSWVTDW) folds into the CHCH domain. The short motif at 30-40 (CWQNYLDFHRC) is the Cx9C motif element. Disulfide bonds link cysteine 30–cysteine 65 and cysteine 40–cysteine 54. The Cx10C motif motif lies at 54–65 (CEWYQRVYQSLC).

The protein belongs to the cytochrome c oxidase subunit 6B family. Component of the cytochrome c oxidase (complex IV, CIV), a multisubunit enzyme composed of 14 subunits. The complex is composed of a catalytic core of 3 subunits MT-CO1, MT-CO2 and MT-CO3, encoded in the mitochondrial DNA, and 11 supernumerary subunits COX4I1 (or COX4I2), COX5A, COX5B, COX6A1 (or COX6A2), COX6B1 (or COX6B2), COX6C, COX7A2 (or COX7A1), COX7B, COX7C, COX8A and NDUFA4, which are encoded in the nuclear genome. The complex exists as a monomer or a dimer and forms supercomplexes (SCs) in the inner mitochondrial membrane with NADH-ubiquinone oxidoreductase (complex I, CI) and ubiquinol-cytochrome c oxidoreductase (cytochrome b-c1 complex, complex III, CIII), resulting in different assemblies (supercomplex SCI(1)III(2)IV(1) and megacomplex MCI(2)III(2)IV(2)).

The protein resides in the mitochondrion inner membrane. The protein operates within energy metabolism; oxidative phosphorylation. In terms of biological role, component of the cytochrome c oxidase, the last enzyme in the mitochondrial electron transport chain which drives oxidative phosphorylation. The respiratory chain contains 3 multisubunit complexes succinate dehydrogenase (complex II, CII), ubiquinol-cytochrome c oxidoreductase (cytochrome b-c1 complex, complex III, CIII) and cytochrome c oxidase (complex IV, CIV), that cooperate to transfer electrons derived from NADH and succinate to molecular oxygen, creating an electrochemical gradient over the inner membrane that drives transmembrane transport and the ATP synthase. Cytochrome c oxidase is the component of the respiratory chain that catalyzes the reduction of oxygen to water. Electrons originating from reduced cytochrome c in the intermembrane space (IMS) are transferred via the dinuclear copper A center (CU(A)) of subunit 2 and heme A of subunit 1 to the active site in subunit 1, a binuclear center (BNC) formed by heme A3 and copper B (CU(B)). The BNC reduces molecular oxygen to 2 water molecules using 4 electrons from cytochrome c in the IMS and 4 protons from the mitochondrial matrix. The chain is Cytochrome c oxidase subunit 6B1 (COX6B1) from Homo sapiens (Human).